Consider the following 369-residue polypeptide: Putative 2-aminoethylphosphonate import ATP-binding protein PhnT (369 aa).

The region spanning 19-250 (IVLDSLRVAY…PPNRFASEFL (232 aa)) is the ABC transporter domain. 51–58 (GPSGSGKT) lines the ATP pocket.

It belongs to the ABC transporter superfamily. 2-aminoethylphosphonate importer (TC 3.A.1.11.5) family.

The protein resides in the cell inner membrane. Its function is as follows. Probably part of the PhnSTUV complex (TC 3.A.1.11.5) involved in 2-aminoethylphosphonate import. Probably responsible for energy coupling to the transport system. The chain is Putative 2-aminoethylphosphonate import ATP-binding protein PhnT (phnT) from Salmonella choleraesuis (strain SC-B67).